We begin with the raw amino-acid sequence, 303 residues long: Glutamyl-Q tRNA(Asp) synthetase (303 aa).

L-glutamate-binding positions include 9–13 (RFAPS) and Glu45. Residues 12–22 (PSPTGAMHLGN) carry the 'HIGH' region motif. 4 residues coordinate Zn(2+): Cys100, Cys102, Tyr125, and Cys129. The L-glutamate site is built by Tyr184 and Arg202. Positions 240–244 (RLAKR) match the 'KMSKS' region motif. Lys243 serves as a coordination point for ATP.

The protein belongs to the class-I aminoacyl-tRNA synthetase family. GluQ subfamily. Requires Zn(2+) as cofactor.

Catalyzes the tRNA-independent activation of glutamate in presence of ATP and the subsequent transfer of glutamate onto a tRNA(Asp). Glutamate is transferred on the 2-amino-5-(4,5-dihydroxy-2-cyclopenten-1-yl) moiety of the queuosine in the wobble position of the QUC anticodon. This chain is Glutamyl-Q tRNA(Asp) synthetase, found in Deinococcus geothermalis (strain DSM 11300 / CIP 105573 / AG-3a).